Reading from the N-terminus, the 288-residue chain is Glucose-1-phosphate thymidylyltransferase (288 aa).

Residues D108 and D223 each contribute to the Mg(2+) site.

Belongs to the glucose-1-phosphate thymidylyltransferase family. In terms of assembly, homotetramer. Mg(2+) is required as a cofactor.

The catalysed reaction is dTTP + alpha-D-glucose 1-phosphate + H(+) = dTDP-alpha-D-glucose + diphosphate. Functionally, catalyzes the formation of dTDP-glucose, from dTTP and glucose 1-phosphate, as well as its pyrophosphorolysis. In Neisseria meningitidis serogroup A / serotype 4A (strain DSM 15465 / Z2491), this protein is Glucose-1-phosphate thymidylyltransferase (rmlA1).